The chain runs to 645 residues: Methionine--tRNA ligase (645 aa).

The 'HIGH' region motif lies at 13–23 (YYPSTNLHIGN). C128, C131, C145, and C148 together coordinate Zn(2+). Residues 298–302 (KMSKS) carry the 'KMSKS' region motif. K301 contributes to the ATP binding site. Residues 544-645 (DFDKIDLRVV…GEMLTGSQVR (102 aa)) form the tRNA-binding domain.

The protein belongs to the class-I aminoacyl-tRNA synthetase family. MetG type 2A subfamily. Homodimer. Zn(2+) is required as a cofactor.

It localises to the cytoplasm. It carries out the reaction tRNA(Met) + L-methionine + ATP = L-methionyl-tRNA(Met) + AMP + diphosphate. Its function is as follows. Is required not only for elongation of protein synthesis but also for the initiation of all mRNA translation through initiator tRNA(fMet) aminoacylation. This chain is Methionine--tRNA ligase (metG), found in Clostridium perfringens (strain 13 / Type A).